An 89-amino-acid chain; its full sequence is Small ribosomal subunit protein bS16c (89 aa).

This sequence belongs to the bacterial ribosomal protein bS16 family.

It is found in the plastid. The protein localises to the chloroplast. The chain is Small ribosomal subunit protein bS16c from Morus indica (Mulberry).